The primary structure comprises 999 residues: Embryonic polarity protein dorsal (999 aa).

The interval 1–44 (MFPNQNNGAAPGQGPAVDGQQSLNYNGLPAQQQQQLAQSTKNVR) is disordered. Residues 47–342 (PYVKITEQPA…TFWNLHRHLK (296 aa)) form the RHD domain. Position 312 is a phosphoserine; by PKA (serine 312). Disordered regions lie at residues 389-424 (FNHE…EQYT) and 670-851 (QARK…SVSG). Low complexity predominate over residues 402–424 (EQEQSVQQEQYTQEQSLQQEQYT). The Nuclear export signal signature appears at 668-677 (NSQARKPETP). Pro residues predominate over residues 677 to 686 (PMRPVPPVPP). Positions 710–719 (KQDSNAENRS) are enriched in basic and acidic residues. Residues 720–734 (IEANTVQTKPSTGES) are compositionally biased toward polar residues. Positions 756 to 773 (KKPGFFSKLFSRRKSKPD) match the Nuclear localization signal motif. Composition is skewed to low complexity over residues 819-829 (SNPAPAKSSPV) and 836-851 (SKLT…SVSG).

As to quaternary structure, interacts with tamo via the nuclear localization signal. Interacts with emb, a component of the nuclear export complex. In terms of tissue distribution, in unchallenged larvae, expression of both isoforms is seen in fat body and gut (isoform A is more abundant). After immune challenge levels of both isoforms are enhanced.

The protein resides in the cytoplasm. It localises to the nucleus. Embryonic developmental transcription factor. The lateral or ventral identity of a cell depends upon the concentration of this protein in its nucleus during the blastoderm stage. Acts as a morphogenetic transcription factor that specifically binds to the kappa-B-related consensus sequence 5'-GRGAAAANCC-3', located in the enhancer region of zygotic genes such as Zen, Twist, Snail and Decapentaplegic, promoting their expression. Part of a signaling pathway involving NF-kappa-B and Toll-related receptors, that functions in the apoptosis of unfit cells during cell competition. Mediates an immune response in larvae. May be part of a NF-kappa-B and Tollo signaling cascade that regulates development of the peripheral nervous system. The chain is Embryonic polarity protein dorsal (dl) from Drosophila melanogaster (Fruit fly).